A 130-amino-acid chain; its full sequence is S-adenosylmethionine decarboxylase proenzyme (130 aa).

Residue Ser63 is the Schiff-base intermediate with substrate; via pyruvic acid of the active site. A Pyruvic acid (Ser); by autocatalysis modification is found at Ser63. Catalysis depends on His68, which acts as the Proton acceptor; for processing activity. Cys83 serves as the catalytic Proton donor; for catalytic activity.

It belongs to the prokaryotic AdoMetDC family. Type 1 subfamily. Heterotetramer of two alpha and two beta chains arranged as a dimer of alpha/beta heterodimers. The cofactor is pyruvate. In terms of processing, is synthesized initially as an inactive proenzyme. Formation of the active enzyme involves a self-maturation process in which the active site pyruvoyl group is generated from an internal serine residue via an autocatalytic post-translational modification. Two non-identical subunits are generated from the proenzyme in this reaction, and the pyruvate is formed at the N-terminus of the alpha chain, which is derived from the carboxyl end of the proenzyme. The post-translation cleavage follows an unusual pathway, termed non-hydrolytic serinolysis, in which the side chain hydroxyl group of the serine supplies its oxygen atom to form the C-terminus of the beta chain, while the remainder of the serine residue undergoes an oxidative deamination to produce ammonia and the pyruvoyl group blocking the N-terminus of the alpha chain.

It carries out the reaction S-adenosyl-L-methionine + H(+) = S-adenosyl 3-(methylsulfanyl)propylamine + CO2. It functions in the pathway amine and polyamine biosynthesis; S-adenosylmethioninamine biosynthesis; S-adenosylmethioninamine from S-adenosyl-L-methionine: step 1/1. Its function is as follows. Catalyzes the decarboxylation of S-adenosylmethionine to S-adenosylmethioninamine (dcAdoMet), the propylamine donor required for the synthesis of the polyamines spermine and spermidine from the diamine putrescine. The sequence is that of S-adenosylmethionine decarboxylase proenzyme from Thermosipho africanus (strain TCF52B).